A 225-amino-acid polypeptide reads, in one-letter code: Thymidylate kinase (225 aa).

12–19 (GGEGAGKS) contributes to the ATP binding site.

The protein belongs to the thymidylate kinase family.

The catalysed reaction is dTMP + ATP = dTDP + ADP. In terms of biological role, phosphorylation of dTMP to form dTDP in both de novo and salvage pathways of dTTP synthesis. This chain is Thymidylate kinase, found in Chelativorans sp. (strain BNC1).